The primary structure comprises 247 residues: 5'-nucleotidase SurE (247 aa).

Asp-8, Asp-9, Ser-39, and Asn-91 together coordinate a divalent metal cation.

This sequence belongs to the SurE nucleotidase family. Requires a divalent metal cation as cofactor.

Its subcellular location is the cytoplasm. The catalysed reaction is a ribonucleoside 5'-phosphate + H2O = a ribonucleoside + phosphate. Its function is as follows. Nucleotidase that shows phosphatase activity on nucleoside 5'-monophosphates. In Nitrosomonas europaea (strain ATCC 19718 / CIP 103999 / KCTC 2705 / NBRC 14298), this protein is 5'-nucleotidase SurE.